The sequence spans 950 residues: Protocadherin alpha-6 (950 aa).

Positions 1 to 29 (MVFTPEDRLGKQCLLLPLLLLAAWKVGSG) are cleaved as a signal peptide. Topologically, residues 30 to 697 (QLHYSVPEEA…GPEAALVDVN (668 aa)) are extracellular. Cadherin domains are found at residues 34–133 (SVPE…PPLF), 157–242 (ASDA…APNF), 243–350 (EQSE…VPEI), 351–455 (ALTS…APAF), 456–565 (AQPE…APAL), and 581–678 (VPRS…APKA). Asn-257, Asn-265, Asn-386, and Asn-548 each carry an N-linked (GlcNAc...) asparagine glycan. Residues 698 to 718 (VYLIIAICAVSSLLVLTLLLY) traverse the membrane as a helical segment. Topologically, residues 719–950 (TALRCSAPST…GNSTTDNSDQ (232 aa)) are cytoplasmic. PXXP repeat units lie at residues 799-802 (PRQP), 832-835 (PGGP), 873-876 (PGNP), and 891-894 (PGSP). Positions 799 to 894 (PRQPNPDWRY…PDKFIIPGSP (96 aa)) are 4 X 4 AA repeats of P-X-X-P. A disordered region spans residues 830-889 (AGPGGPDQQWPTVSSATPEPEAGEVSPPVGAGVNSNSWTFKYGPGNPKQSGPGELPDKFI). The disordered stretch occupies residues 901–950 (QEPANSQIDKSDFITFGKKEETKKKKKKKKGNKTQEKKEKGNSTTDNSDQ). The segment covering 909–923 (DKSDFITFGKKEETK) has biased composition (basic and acidic residues).

The protein resides in the cell membrane. Potential calcium-dependent cell-adhesion protein. May be involved in the establishment and maintenance of specific neuronal connections in the brain. The sequence is that of Protocadherin alpha-6 (PCDHA6) from Pan troglodytes (Chimpanzee).